The chain runs to 347 residues: D-alanine--D-alanine ligase (347 aa).

The ATP-grasp domain maps to 134–332 (KLYAKDLGVK…LAQSLPKTPK (199 aa)). 161–216 (LIGFNFPFIVKPSNAGSSLGVNVVKEEKELIYALDSAFEYSKEVLIEPFIQGVKEY) provides a ligand contact to ATP. Asp-288, Glu-300, and Asn-302 together coordinate Mg(2+).

It belongs to the D-alanine--D-alanine ligase family. Mg(2+) is required as a cofactor. It depends on Mn(2+) as a cofactor.

Its subcellular location is the cytoplasm. The enzyme catalyses 2 D-alanine + ATP = D-alanyl-D-alanine + ADP + phosphate + H(+). Its pathway is cell wall biogenesis; peptidoglycan biosynthesis. Its function is as follows. Cell wall formation. This is D-alanine--D-alanine ligase from Helicobacter pylori (strain J99 / ATCC 700824) (Campylobacter pylori J99).